We begin with the raw amino-acid sequence, 189 residues long: Interferon alpha-D (189 aa).

The first 23 residues, methionine 1 to glycine 23, serve as a signal peptide directing secretion. 2 disulfides stabilise this stretch: cysteine 24–cysteine 122 and cysteine 52–cysteine 162.

Belongs to the alpha/beta interferon family.

It localises to the secreted. Its function is as follows. Produced by macrophages, IFN-alpha have antiviral activities. Interferon stimulates the production of two enzymes: a protein kinase and an oligoadenylate synthetase. This chain is Interferon alpha-D (IFNAD), found in Bos taurus (Bovine).